The following is a 202-amino-acid chain: MVRVKICGITSLEDALMAVEAGADALGFVFHEDSPRHVPPEQATGIIAGLPPFVQTVGLFVNRPIAYVNETAARCRIDLVQLHGDEPPEFCAAVERRVIKAFRVQDITSLDPIKHYRVAAHLLDAYSPKAYGGTGLTFNWDIAAAAKEFGPVILAGGLTPDNIREAVEAVNPYAVDVSGGVESAPGRKDAAKVREFIRRAKA.

Belongs to the TrpF family.

The enzyme catalyses N-(5-phospho-beta-D-ribosyl)anthranilate = 1-(2-carboxyphenylamino)-1-deoxy-D-ribulose 5-phosphate. The protein operates within amino-acid biosynthesis; L-tryptophan biosynthesis; L-tryptophan from chorismate: step 3/5. This is N-(5'-phosphoribosyl)anthranilate isomerase from Geobacter metallireducens (strain ATCC 53774 / DSM 7210 / GS-15).